The sequence spans 350 residues: MDINLFDFHLPEELIAQIPLEERETSRLMVLDRETGDIEHKHFADILSYLQEGDCLVLNETKVMPARLHGVKEDTGAHIEVLLLKQEEGDKWETLIKPAKRVKEGTVISFGEGKLKATCIGTADQGGRQLEFSYDGIFYEILDELGEMPLPPYIKETLEDRDRYQTVYAKEIGSAAAPTAGLHFTEELLEKLKQKGVGLAFITLHVGLGTFRPVSADTIEEHHMHAEYYHMSEETAALLNRVKEDGGRIITVGTTSTRTLETIATDHSGKLCAASGWTDIFMYPGYEFKAIDGLITNFHLPKSTLIMLVSAFSNRDNVLHAYNEAVKEKYRFFSFGDAMFVASHAKMRNK.

It belongs to the QueA family. In terms of assembly, monomer.

It localises to the cytoplasm. The catalysed reaction is 7-aminomethyl-7-carbaguanosine(34) in tRNA + S-adenosyl-L-methionine = epoxyqueuosine(34) in tRNA + adenine + L-methionine + 2 H(+). The protein operates within tRNA modification; tRNA-queuosine biosynthesis. Transfers and isomerizes the ribose moiety from AdoMet to the 7-aminomethyl group of 7-deazaguanine (preQ1-tRNA) to give epoxyqueuosine (oQ-tRNA). The chain is S-adenosylmethionine:tRNA ribosyltransferase-isomerase from Bacillus mycoides (strain KBAB4) (Bacillus weihenstephanensis).